A 200-amino-acid chain; its full sequence is Proteasome subunit beta 2 (200 aa).

Residues 1 to 7 (METKKTG) constitute a propeptide, removed in mature form; by autocatalysis. The Nucleophile role is filled by threonine 8.

It belongs to the peptidase T1B family. The 20S proteasome core is composed of 14 alpha and 14 beta subunits that assemble into four stacked heptameric rings, resulting in a barrel-shaped structure. The two inner rings, each composed of seven catalytic beta subunits, are sandwiched by two outer rings, each composed of seven alpha subunits. The catalytic chamber with the active sites is on the inside of the barrel. Has a gated structure, the ends of the cylinder being occluded by the N-termini of the alpha-subunits. Is capped at one or both ends by the proteasome regulatory ATPase, PAN.

It localises to the cytoplasm. It carries out the reaction Cleavage of peptide bonds with very broad specificity.. The formation of the proteasomal ATPase PAN-20S proteasome complex, via the docking of the C-termini of PAN into the intersubunit pockets in the alpha-rings, triggers opening of the gate for substrate entry. Interconversion between the open-gate and close-gate conformations leads to a dynamic regulation of the 20S proteasome proteolysis activity. Functionally, component of the proteasome core, a large protease complex with broad specificity involved in protein degradation. This is Proteasome subunit beta 2 from Thermococcus onnurineus (strain NA1).